A 272-amino-acid polypeptide reads, in one-letter code: tRNA pseudouridine synthase A (272 aa).

Asp-51 acts as the Nucleophile in catalysis. Tyr-109 contributes to the substrate binding site.

It belongs to the tRNA pseudouridine synthase TruA family. In terms of assembly, homodimer.

It catalyses the reaction uridine(38/39/40) in tRNA = pseudouridine(38/39/40) in tRNA. In terms of biological role, formation of pseudouridine at positions 38, 39 and 40 in the anticodon stem and loop of transfer RNAs. The sequence is that of tRNA pseudouridine synthase A from Verminephrobacter eiseniae (strain EF01-2).